Reading from the N-terminus, the 298-residue chain is NADH-cytochrome b5 reductase 1 (298 aa).

The helical transmembrane segment at 14–34 (VILAGAYLIDPSALPFVAAGV) threads the bilayer. The region spanning 56–159 (KEYRKFKLVD…RGPKGQFSYT (104 aa)) is the FAD-binding FR-type domain. FAD-binding positions include 139-154 (SELS…GPKG) and 165-197 (AIGM…QVNF).

Belongs to the flavoprotein pyridine nucleotide cytochrome reductase family. Monomer. Component of the 2-(3-amino-3-carboxypropyl)histidine synthase complex composed of DPH1, DPH2, DPH3 and a NADH-dependent reductase, predominantly CBR1. The cofactor is FAD.

The protein localises to the mitochondrion outer membrane. The enzyme catalyses 2 Fe(III)-[cytochrome b5] + NADH = 2 Fe(II)-[cytochrome b5] + NAD(+) + H(+). The catalysed reaction is 2 Fe(3+)-[Dph3] + NADH = 2 Fe(2+)-[Dph3] + NAD(+) + H(+). It participates in protein modification; peptidyl-diphthamide biosynthesis. In terms of biological role, NADH-dependent reductase for DPH3 and cytochrome b5. Required for the first step of diphthamide biosynthesis, a post-translational modification of histidine which occurs in elongation factor 2. DPH1 and DPH2 transfer a 3-amino-3-carboxypropyl (ACP) group from S-adenosyl-L-methionine (SAM) to a histidine residue, the reaction is assisted by a reduction system comprising DPH3 and a NADH-dependent reductase, predominantly CBR1. By reducing DPH3, also involved in the formation of the tRNA wobble base modification mcm5s 2U (5-methoxycarbonylmethyl-2-thiouridine), mediated by the elongator complex. The cytochrome b5/NADH cytochrome b5 reductase electron transfer system supports the catalytic activity of several sterol biosynthetic enzymes. The protein is NADH-cytochrome b5 reductase 1 (CBR1) of Mortierella alpina (Oleaginous fungus).